Consider the following 179-residue polypeptide: MARLQQFYKETIVSDLVKQFGYKSVMEVPRITKITLNMGVGEAVADKKVLENAVGDMQKIAGQKPVTTKARKSIAGFKIRDGYPIGCMVTLRGPRMFEFLDRLVTIALPRVRDFRGISGKGFDGQGNYNMGVKEQIIFPEIEYDKIDALRGMNISITTTAKTDAEAKALLVAFKFPFKN.

Belongs to the universal ribosomal protein uL5 family. As to quaternary structure, part of the 50S ribosomal subunit; part of the 5S rRNA/L5/L18/L25 subcomplex. Contacts the 5S rRNA and the P site tRNA. Forms a bridge to the 30S subunit in the 70S ribosome.

Its function is as follows. This is one of the proteins that bind and probably mediate the attachment of the 5S RNA into the large ribosomal subunit, where it forms part of the central protuberance. In the 70S ribosome it contacts protein S13 of the 30S subunit (bridge B1b), connecting the 2 subunits; this bridge is implicated in subunit movement. Contacts the P site tRNA; the 5S rRNA and some of its associated proteins might help stabilize positioning of ribosome-bound tRNAs. This chain is Large ribosomal subunit protein uL5, found in Dechloromonas aromatica (strain RCB).